The following is a 332-amino-acid chain: Ketol-acid reductoisomerase (NADP(+)) (332 aa).

The KARI N-terminal Rossmann domain maps to 2 to 182 (AKIYTDKDVS…GATRAGVIET (181 aa)). NADP(+)-binding positions include 25-28 (YGSQ), Ser-53, and 83-86 (DMIQ). His-108 is a catalytic residue. Residue Gly-134 coordinates NADP(+). A KARI C-terminal knotted domain is found at 183 to 328 (TFKEETETDL…RSLRDIILRG (146 aa)). Residues Asp-191, Glu-195, Glu-227, and Glu-231 each coordinate Mg(2+). Ser-252 contacts substrate.

Belongs to the ketol-acid reductoisomerase family. Mg(2+) is required as a cofactor.

The enzyme catalyses (2R)-2,3-dihydroxy-3-methylbutanoate + NADP(+) = (2S)-2-acetolactate + NADPH + H(+). It carries out the reaction (2R,3R)-2,3-dihydroxy-3-methylpentanoate + NADP(+) = (S)-2-ethyl-2-hydroxy-3-oxobutanoate + NADPH + H(+). Its pathway is amino-acid biosynthesis; L-isoleucine biosynthesis; L-isoleucine from 2-oxobutanoate: step 2/4. It participates in amino-acid biosynthesis; L-valine biosynthesis; L-valine from pyruvate: step 2/4. Functionally, involved in the biosynthesis of branched-chain amino acids (BCAA). Catalyzes an alkyl-migration followed by a ketol-acid reduction of (S)-2-acetolactate (S2AL) to yield (R)-2,3-dihydroxy-isovalerate. In the isomerase reaction, S2AL is rearranged via a Mg-dependent methyl migration to produce 3-hydroxy-3-methyl-2-ketobutyrate (HMKB). In the reductase reaction, this 2-ketoacid undergoes a metal-dependent reduction by NADPH to yield (R)-2,3-dihydroxy-isovalerate. This chain is Ketol-acid reductoisomerase (NADP(+)), found in Sulfolobus acidocaldarius (strain ATCC 33909 / DSM 639 / JCM 8929 / NBRC 15157 / NCIMB 11770).